Here is a 272-residue protein sequence, read N- to C-terminus: Potassium channel regulatory protein (272 aa).

A BTB domain is found at 5–106 (ELVTLNVGGK…LLNPYLLQPR (102 aa)).

Can form homooligomers. Interacts with KCNA1 (via cytoplasmic N-terminal domain) and KCNA4. As to expression, ubiquitous in normal tissues and expressed in some tumor tissues.

It is found in the endoplasmic reticulum. In terms of biological role, inhibits potassium fluxes in cells. May regulate Kv1 family channel proteins by retaining a fraction of channels in endomembranes. In Homo sapiens (Human), this protein is Potassium channel regulatory protein (KCNRG).